We begin with the raw amino-acid sequence, 1154 residues long: Serine-aspartate repeat-containing protein E (1154 aa).

The first 52 residues, 1-52 (MINRDNKKAITKKGMISNRLNKFSIRKYTVGTASILVGTTLIFGLGNQEAKA), serve as a signal peptide directing secretion. The short motif at 23–34 (FSIRKYTVGTAS) is the YSIRK-G/S signaling motif element. The ligand binding A region stretch occupies residues 53-606 (AENTSTENAK…GDGTVKPEEK (554 aa)). The disordered stretch occupies residues 54–230 (ENTSTENAKQ…SKEELKNNPE (177 aa)). Basic and acidic residues predominate over residues 61–75 (AKQDDATTSDNKEVV). Positions 77–90 (ETENNSTTENNSTN) are enriched in low complexity. Over residues 92 to 108 (IKKETNTDSQPEAKKES) the composition is skewed to basic and acidic residues. Polar residues predominate over residues 118–129 (NNVTATTETKPQ). Residues 130-145 (NIEKENVKPSTDKTAT) show a composition bias toward basic and acidic residues. Residues 166 to 178 (TTKPSTSEPSTSE) show a composition bias toward low complexity. A compositionally biased stretch (polar residues) spans 179–212 (IQTKPTTPQESTNIENSQPQPTPSKVDNQVTDAT). Residues 221–230 (SKEELKNNPE) are compositionally biased toward basic and acidic residues. CNA-B domains lie at 607 to 719 (LYKI…YKEP), 720 to 829 (KYNL…YKTP), and 830 to 940 (KYSL…EEDT). Positions 904-1129 (VTNTTEDDKD…TGSENNGSNN (226 aa)) are disordered. Acidic residues-rich tracts occupy residues 908 to 918 (TEDDKDADGGE) and 935 to 1093 (YFEE…DSDS). The LPXTG sorting signal signature appears at 1117–1121 (LPETG). Position 1120 is a pentaglycyl murein peptidoglycan amidated threonine (Thr1120). Residues 1121 to 1154 (GSENNGSNNATLFGGLFAALGSLLLFGRRKKQNK) constitute a propeptide, removed by sortase.

Belongs to the serine-aspartate repeat-containing protein (SDr) family. As to quaternary structure, interacts with host complement factor H/CFAH (via C-terminus). Interacts with host complement regulator C4BPA.

The protein localises to the secreted. The protein resides in the cell wall. Functionally, cell surface-associated calcium-binding protein which plays an important role in adhesion and pathogenesis. Contributes to the resistance to killing by innate immune components in blood and thus attenuates bacterial clearance by interacting with host complement factor H/CFAH and modulating its activity. Also inhibits bacterial opsonization and killing by interacting with host complement regulator C4BPA and thus inhibiting classical complement pathway activation. This Staphylococcus aureus (strain USA300) protein is Serine-aspartate repeat-containing protein E (sdrE).